Consider the following 601-residue polypeptide: MTTQAPPSALLPLNPEQLARLQAATTDLSPTQLAWVSGYFWGMLNQQPGTLAATPAPVAEMPGITLISASQTGNARRVAEALRDDLLAAKLSVTLVNAGDYKFKQIANEKLLVVVASTQGEGEPPEEAVALRKFLFSKKAPKLDNTAFAVFGLGDTSYEFFCQAGKDFDSKLAELGGERLLDRVDADVEYQAAAQEWRARVVDVLKARAPSASAAQVAVAATGAVNDVHSSPYTKEAPLSASLAVNQKITGRDSEKDVRHIEIDLGDSGLRYQPGDALGVWYQNDPELVKEIVELVWLKGTEPVTVNGKVLPLAEALQWHFELTVNTANIVENYATLTRSESLLPLVGDKAQLQHYAATTPIVDMLRFSPAQLDADALVGLLRPLTPRLYSIASSQAEVESEVHITVGAVRYEIEGRARAGGASSFLADRVEEEGEVRVFIEHNDNFRLPANPETPVIMIGPGTGIAPFRAFMQQRAADEAPGKNWLFFGNPHFTEDFLYQVEWQRYVKEGVLSRIDLAWSRDQKEKIYVQDKLREQGAELWRWINDGAHIYVCGDANCMAKDVEQALLEVIAEFGGMDAEAADEFLSELRVERRYQRDVY.

In terms of domain architecture, Flavodoxin-like spans 64–202 (ITLISASQTG…AAQEWRARVV (139 aa)). Residues 70–75 (SQTGNA), 117–120 (STQG), and 153–162 (LGDTSYEFFC) contribute to the FMN site. Residues 236–450 (EAPLSASLAV…IEHNDNFRLP (215 aa)) enclose the FAD-binding FR-type domain. FAD-binding positions include threonine 324, alanine 358, 388-391 (RLYS), 406-408 (TVG), tyrosine 412, and 421-424 (GGAS). NADP(+) contacts are provided by residues 521–522 (SR), 527–531 (KIYVQ), and aspartate 563. Tyrosine 601 serves as a coordination point for FAD.

It belongs to the NADPH-dependent sulphite reductase flavoprotein subunit CysJ family. In the N-terminal section; belongs to the flavodoxin family. This sequence in the C-terminal section; belongs to the flavoprotein pyridine nucleotide cytochrome reductase family. Alpha(8)-beta(8). The alpha component is a flavoprotein, the beta component is a hemoprotein. It depends on FAD as a cofactor. Requires FMN as cofactor.

It catalyses the reaction hydrogen sulfide + 3 NADP(+) + 3 H2O = sulfite + 3 NADPH + 4 H(+). Its pathway is sulfur metabolism; hydrogen sulfide biosynthesis; hydrogen sulfide from sulfite (NADPH route): step 1/1. In terms of biological role, component of the sulfite reductase complex that catalyzes the 6-electron reduction of sulfite to sulfide. This is one of several activities required for the biosynthesis of L-cysteine from sulfate. The flavoprotein component catalyzes the electron flow from NADPH -&gt; FAD -&gt; FMN to the hemoprotein component. The polypeptide is Sulfite reductase [NADPH] flavoprotein alpha-component (Citrobacter koseri (strain ATCC BAA-895 / CDC 4225-83 / SGSC4696)).